A 406-amino-acid polypeptide reads, in one-letter code: Dematin (406 aa).

2 disordered regions span residues 1–30 (MERL…PSSI) and 78–333 (LPRS…DRGN). Over residues 11-29 (SPGSVSSSRDSSVPGSPSS) the composition is skewed to low complexity. Phosphoserine occurs at positions 16, 18, 26, 92, 96, 105, 110, 113, 157, and 227. Over residues 105–114 (SPGTISQASA) the composition is skewed to polar residues. Acidic residues predominate over residues 217–228 (EEEEEEEDDDSG). Positions 225 to 309 (DDSGEEMKAL…SRLQSTDFSP (85 aa)) are interaction with RASGRF2. Composition is skewed to basic and acidic residues over residues 229-243 (EEMK…EELS) and 253-262 (ILKEEMEKSL). Ser270, Ser280, Ser290, Ser304, Ser316, Ser334, Ser373, and Ser384 each carry phosphoserine. Residues 282–323 (HAGTSKSSSLPAYGRTTLSRLQSTDFSPSGSEAESPGLQNGE) show a composition bias toward polar residues. An HP domain is found at 338-406 (VLEQKIYPYE…NELKKKASLF (69 aa)). Position 404 is a phosphoserine; by PKA (Ser404).

Belongs to the villin/gelsolin family. As to quaternary structure, monomeric; under reducing conditions. Self-associates. Exists under oxidizing condition as a trimer linked by disulfide bonds. Found in a complex with DMTN, F-actin and spectrin. Found in a complex with ADD2, DMTN and SLC2A1. Interacts with F-actin, ITPKB and spectrin. Interacts with SLC2A1 (via C-terminus cytoplasmic region). Interacts with RASGRF2. Phosphorylated. Phosphorylation at Ser-404 by PKA causes the C-terminal headpiece domain to associate with the N-terminal core domain, and leads to the inhibition of its actin bundling activity.

The protein resides in the cytoplasm. It is found in the cytosol. Its subcellular location is the perinuclear region. It localises to the cytoskeleton. The protein localises to the cell membrane. The protein resides in the membrane. It is found in the endomembrane system. Its subcellular location is the cell projection. Membrane-cytoskeleton-associated protein with F-actin-binding activity that induces F-actin bundles formation and stabilization. Its F-actin-bundling activity is reversibly regulated upon its phosphorylation by the cAMP-dependent protein kinase A (PKA). Binds to the erythrocyte membrane glucose transporter-1 SLC2A1/GLUT1, and hence stabilizes and attaches the spectrin-actin network to the erythrocytic plasma membrane. Plays a role in maintaining the functional integrity of PKA-activated erythrocyte shape and the membrane mechanical properties. Also plays a role as a modulator of actin dynamics in fibroblasts; acts as a negative regulator of the RhoA activation pathway. In platelets, functions as a regulator of internal calcium mobilization across the dense tubular system that affects platelet granule secretion pathways and aggregation. Also required for the formation of a diverse set of cell protrusions, such as filopodia and lamellipodia, necessary for platelet cell spreading, motility and migration. Acts as a tumor suppressor and inhibits malignant cell transformation. This is Dematin (DMTN) from Bos taurus (Bovine).